The sequence spans 326 residues: Ketol-acid reductoisomerase (NADP(+)) (326 aa).

The 180-residue stretch at 1 to 180 (MDIIHDNAAD…GLTRGGVLEC (180 aa)) folds into the KARI N-terminal Rossmann domain. Residues 24-27 (YGAQ), R47, and S51 each bind NADP(+). H106 is an active-site residue. G132 serves as a coordination point for NADP(+). The KARI C-terminal knotted domain maps to 181–326 (TMAQETYEDL…AKIRSLFERN (146 aa)). D189, E193, E225, and E229 together coordinate Mg(2+). S250 contacts substrate.

Belongs to the ketol-acid reductoisomerase family. Requires Mg(2+) as cofactor.

The enzyme catalyses (2R)-2,3-dihydroxy-3-methylbutanoate + NADP(+) = (2S)-2-acetolactate + NADPH + H(+). It carries out the reaction (2R,3R)-2,3-dihydroxy-3-methylpentanoate + NADP(+) = (S)-2-ethyl-2-hydroxy-3-oxobutanoate + NADPH + H(+). Its pathway is amino-acid biosynthesis; L-isoleucine biosynthesis; L-isoleucine from 2-oxobutanoate: step 2/4. It functions in the pathway amino-acid biosynthesis; L-valine biosynthesis; L-valine from pyruvate: step 2/4. Functionally, involved in the biosynthesis of branched-chain amino acids (BCAA). Catalyzes an alkyl-migration followed by a ketol-acid reduction of (S)-2-acetolactate (S2AL) to yield (R)-2,3-dihydroxy-isovalerate. In the isomerase reaction, S2AL is rearranged via a Mg-dependent methyl migration to produce 3-hydroxy-3-methyl-2-ketobutyrate (HMKB). In the reductase reaction, this 2-ketoacid undergoes a metal-dependent reduction by NADPH to yield (R)-2,3-dihydroxy-isovalerate. This chain is Ketol-acid reductoisomerase (NADP(+)), found in Akkermansia muciniphila (strain ATCC BAA-835 / DSM 22959 / JCM 33894 / BCRC 81048 / CCUG 64013 / CIP 107961 / Muc).